Here is a 343-residue protein sequence, read N- to C-terminus: Arginine-hydroxylase NDUFAF5, mitochondrial (343 aa).

The transit peptide at 1–29 (MLRKVVLLRLCPLLGRPAVSASSGSRREV) directs the protein to the mitochondrion.

It belongs to the methyltransferase superfamily. As to quaternary structure, interacts with NDUFAF8, leading to stabilize NDUFAF5. Interacts with NDUFS7. Interacts with PYURF (via TRM112 domain); the interaction is direct and stabilizes NDUFAF5 protein.

It is found in the mitochondrion inner membrane. In terms of biological role, arginine hydroxylase that mediates hydroxylation of 'Arg-122' of NDUFS7 and is involved in the assembly of mitochondrial NADH:ubiquinone oxidoreductase complex (complex I, MT-ND1) at early stages. May also have methyltransferase activity. This is Arginine-hydroxylase NDUFAF5, mitochondrial from Mus musculus (Mouse).